A 303-amino-acid chain; its full sequence is tRNA-cytidine(32) 2-sulfurtransferase (303 aa).

The PP-loop motif signature appears at 49–54; the sequence is SGGKDS. Residues C124, C127, and C215 each coordinate [4Fe-4S] cluster.

Belongs to the TtcA family. In terms of assembly, homodimer. Mg(2+) serves as cofactor. [4Fe-4S] cluster is required as a cofactor.

The protein resides in the cytoplasm. It carries out the reaction cytidine(32) in tRNA + S-sulfanyl-L-cysteinyl-[cysteine desulfurase] + AH2 + ATP = 2-thiocytidine(32) in tRNA + L-cysteinyl-[cysteine desulfurase] + A + AMP + diphosphate + H(+). It functions in the pathway tRNA modification. Catalyzes the ATP-dependent 2-thiolation of cytidine in position 32 of tRNA, to form 2-thiocytidine (s(2)C32). The sulfur atoms are provided by the cysteine/cysteine desulfurase (IscS) system. This is tRNA-cytidine(32) 2-sulfurtransferase from Anaeromyxobacter sp. (strain Fw109-5).